The chain runs to 275 residues: 3-methyl-2-oxobutanoate hydroxymethyltransferase (275 aa).

2 residues coordinate Mg(2+): Asp49 and Asp88. Residues 49 to 50 (DS), Asp88, and Lys118 contribute to the 3-methyl-2-oxobutanoate site. Glu120 is a binding site for Mg(2+). Catalysis depends on Glu187, which acts as the Proton acceptor.

The protein belongs to the PanB family. As to quaternary structure, homodecamer; pentamer of dimers. Mg(2+) serves as cofactor.

The protein resides in the cytoplasm. The enzyme catalyses 3-methyl-2-oxobutanoate + (6R)-5,10-methylene-5,6,7,8-tetrahydrofolate + H2O = 2-dehydropantoate + (6S)-5,6,7,8-tetrahydrofolate. The protein operates within cofactor biosynthesis; (R)-pantothenate biosynthesis; (R)-pantoate from 3-methyl-2-oxobutanoate: step 1/2. Catalyzes the reversible reaction in which hydroxymethyl group from 5,10-methylenetetrahydrofolate is transferred onto alpha-ketoisovalerate to form ketopantoate. This chain is 3-methyl-2-oxobutanoate hydroxymethyltransferase, found in Brucella suis (strain ATCC 23445 / NCTC 10510).